Here is a 249-residue protein sequence, read N- to C-terminus: Kallikrein-7 (249 aa).

The N-terminal stretch at 1-21 is a signal peptide; sequence MGVWLLSLITVLLSLALETAG. A propeptide spans 22–25 (activation peptide); it reads QGER. Positions 26 to 246 are serine protease; it reads IIDGYKCKEG…YKRWVMETMK (221 aa). Cystine bridges form between Cys-32-Cys-161, Cys-51-Cys-67, Cys-133-Cys-235, Cys-140-Cys-207, Cys-172-Cys-186, and Cys-197-Cys-222. Active-site charge relay system residues include His-66 and Asp-108. The active-site Charge relay system is the Ser-201.

This sequence belongs to the peptidase S1 family. Kallikrein subfamily. As to expression, expressed in skin and, at lower levels, in lung, kidney, brain, heart and spleen. In skin, expressed in high suprabasal keratinocytes and in the luminal parts of hair follicles. Not detected in liver and skeletal muscle.

Its subcellular location is the secreted. It catalyses the reaction Cleavage of proteins with aromatic side chains in the P1 position.. Inhibited by Zn2+ and Cu2+ at low micromolar concentrations. Inhibited by SERPINA12. In terms of biological role, may catalyze the degradation of intercellular cohesive structures in the cornified layer of the skin in the continuous shedding of cells from the skin surface. Specific for amino acid residues with aromatic side chains in the P1 position. Cleaves insulin A chain at '14-Tyr-|-Gln-15' and insulin B chain at '6-Leu-|-Cys-7', '16-Tyr-|-Leu-17', '25-Phe-|-Tyr-26' and '26-Tyr-|-Thr-27'. Could play a role in the activation of precursors to inflammatory cytokines. This chain is Kallikrein-7 (Klk7), found in Mus musculus (Mouse).